The chain runs to 621 residues: E3 SUMO-protein ligase PIAS2 (621 aa).

The region spanning 11–45 (VSSFRVSELQVLLGFAGRNKSGRKHDLLMRALHLL) is the SAP domain. The LXXLL motif motif lies at 19-23 (LQVLL). Residues K46 and K249 each participate in a glycyl lysine isopeptide (Lys-Gly) (interchain with G-Cter in SUMO2) cross-link. In terms of domain architecture, PINIT spans 134-299 (QPSPPIPPVH…SMSVYLVRQL (166 aa)). The segment at 331–412 (PDSEIATTSL…FMEILNDCSD (82 aa)) adopts an SP-RING-type zinc-finger fold. Residues C362, H364, C385, and C388 each contribute to the Zn(2+) site. Glycyl lysine isopeptide (Lys-Gly) (interchain with G-Cter in SUMO2) cross-links involve residues K430, K435, K443, and K452. Residues 467–473 (IDVIDLT) are SUMO1-binding. Residues S476, S477, and S478 each carry the phosphoserine modification. The short motif at 484–492 (PPAKRKCIF) is the Nuclear localization signal element. A Glycyl lysine isopeptide (Lys-Gly) (interchain with G-Cter in SUMO2) cross-link involves residue K489. Phosphoserine is present on S499. K502 is covalently cross-linked (Glycyl lysine isopeptide (Lys-Gly) (interchain with G-Cter in SUMO2)). Positions 577 to 610 (TASSTSVTTTSPHESSTHVSSSSSRSETGVITSS) are enriched in low complexity. The interval 577-621 (TASSTSVTTTSPHESSTHVSSSSSRSETGVITSSGRNIPDIISLD) is disordered.

It belongs to the PIAS family. As to quaternary structure, binds SUMO1 and UBE2I. Interacts with AXIN1, JUN, MDM2, PARK7, TP53 and TP73 isoform alpha, but not TP73 isoform beta. Interacts with STAT4 following IL12 and IFN-alpha stimulation of T-cells. Interacts also with GTF2I, GTF2IRD1, IKFZ1, DAB2 and MSX2, as well as with several steroid receptors, including ESR1, ESR2, NR3C1, PGR, AR, and with NCOA2. Sumoylation of a target protein seems to enhance the interaction. Binds to sumoylated ELK1. Interacts with PLAG1. Binds DNA, such as CDKN1A promoter, in a sequence-specific manner. Interacts with KLF8; the interaction results in SUMO ligation and repression of KLF8 transcriptional activity and of its cell cycle progression into G(1) phase. Interacts with IFIH1/MDA5. Interacts with PML. Interacts with PRDM1. Sumoylated.

It is found in the nucleus speckle. Its subcellular location is the nucleus. The protein resides in the PML body. It carries out the reaction S-ubiquitinyl-[E2 ubiquitin-conjugating enzyme]-L-cysteine + [acceptor protein]-L-lysine = [E2 ubiquitin-conjugating enzyme]-L-cysteine + N(6)-ubiquitinyl-[acceptor protein]-L-lysine.. The protein operates within protein modification; protein sumoylation. Its function is as follows. Functions as an E3-type small ubiquitin-like modifier (SUMO) ligase, stabilizing the interaction between UBE2I and the substrate, and as a SUMO-tethering factor. Plays a crucial role as a transcriptional coregulation in various cellular pathways, including the STAT pathway, the p53 pathway and the steroid hormone signaling pathway. The effects of this transcriptional coregulation, transactivation or silencing may vary depending upon the biological context and PIAS2 isoform studied. However, it seems to be mostly involved in gene silencing. Binds to sumoylated ELK1 and enhances its transcriptional activity by preventing recruitment of HDAC2 by ELK1, thus reversing SUMO-mediated repression of ELK1 transactivation activity. Isoform PIASx-beta, but not isoform PIASx-alpha, promotes MDM2 sumoylation. Isoform PIASx-alpha promotes PARK7 sumoylation. Isoform PIASx-beta promotes NCOA2 sumoylation more efficiently than isoform PIASx-alpha. Sumoylates PML at'Lys-65' and 'Lys-160'. This Mus musculus (Mouse) protein is E3 SUMO-protein ligase PIAS2 (Pias2).